Consider the following 287-residue polypeptide: MNTVKTVRELRAAVARARGEGKRIAFVPTMGNLHSGHAALVTKAAQRADFVVASIFVNPLQFGAGEDLDKYPRTLAADQEKLLQAGCHLLFAPTVEEMYPDGMAVQTRVSVPQLSEGLCGASRPGHFEGVATVVSKLFNMVQPDLAVFGEKDFQQLAVIRAMVRDLNMPIQIIGEPTVRAEDGLALSSRNGYLSPEQRAAAPALYRTLNGMAEAIRRGQRDFSALVADGQAQLDAAGFRKDYLEVRHALTLRPAQVDDRDLVVIAAAYMGSTRLIDNLYLHLEEQTA.

30 to 37 lines the ATP pocket; sequence MGNLHSGH. His-37 functions as the Proton donor in the catalytic mechanism. Position 61 (Gln-61) interacts with (R)-pantoate. Gln-61 is a binding site for beta-alanine. 149-152 serves as a coordination point for ATP; the sequence is GEKD. Gln-155 contributes to the (R)-pantoate binding site. Residues Val-178 and 186–189 each bind ATP; that span reads LSSR.

This sequence belongs to the pantothenate synthetase family. In terms of assembly, homodimer.

It localises to the cytoplasm. It carries out the reaction (R)-pantoate + beta-alanine + ATP = (R)-pantothenate + AMP + diphosphate + H(+). It functions in the pathway cofactor biosynthesis; (R)-pantothenate biosynthesis; (R)-pantothenate from (R)-pantoate and beta-alanine: step 1/1. Its function is as follows. Catalyzes the condensation of pantoate with beta-alanine in an ATP-dependent reaction via a pantoyl-adenylate intermediate. In Pseudomonas entomophila (strain L48), this protein is Pantothenate synthetase.